The following is a 128-amino-acid chain: Nanos homolog 1 (128 aa).

An essential for its translational repressor activity region spans residues 7–23 (FDSWSDYLGLSSLISRG). Residues 25–52 (QPQREGERPRWDVLSPASAEPLPSNESV) are disordered. The Nanos-type zinc finger occupies 56–110 (GCGFCRSNREALSLYTSHRLRALDGRVLCPVLRGYTCPLCGANGDWAHTMRYCPL). Zn(2+) is bound by residues Cys-57, Cys-60, His-73, Cys-84, Cys-92, Cys-95, His-103, and Cys-108. 2 short sequence motifs (C2HC) span residues 57-84 (CGFC…RVLC) and 92-108 (CPLC…MRYC).

The protein belongs to the nanos family. Interacts with ccnb1. In terms of tissue distribution, ovary and testis.

Its subcellular location is the cytoplasm. It is found in the perinuclear region. Acts as a translational repressor. Can mediate repression affecting different steps in the translation process: cap-driven, IRES-driven, polyadenylated RNAs or nonpolyadenylated RNAs. Essential for the development of primordial germ cells (PGCs) by ensuring their proper migration and survival. This Xenopus laevis (African clawed frog) protein is Nanos homolog 1 (nanos1).